The sequence spans 225 residues: UPF0502 protein Ajs_3392 (225 aa).

The protein belongs to the UPF0502 family.

In Acidovorax sp. (strain JS42), this protein is UPF0502 protein Ajs_3392.